Here is a 566-residue protein sequence, read N- to C-terminus: MKQFRVTNEGDIQTTLRGLEVLSVPFLNKGVAFTEEERKELGLKGFLPPKVLTIDDQAKRAYEQYSAQPDDLSKNVYLTALHDRNETLFYRLLNDHLGEMLPIVYTPTVGTAIQRYSHEYRKPRGLYLSIDDPDGMKEAFKQYKDQSDTIDLIVATDAEGILGIGDWGVGGIAISIGKLAVYTAAAGIDPSRVLAVVLDAGTNQESLLNDPLYVGNQHSRVRGERYDQFIDDYVALARETFPNALLHWEDFGAKNARSILKRYKDKVCTFNDDIQGTGAVSLAAVLSCAKASKVPLRDHRVVIFGAGTAGIGIAEQLREALVREGLSEEESYKRFWCIDRNGLLTDDMDQLLDFQKPYARSADEVKDYQRNGDGGGIDLLEVVRQAKPTILIGTSTVSGAFTEEIVKEMASHVKRPAILPMSNPTTLSEAKPEDLIEWTEGRALITTGSPFPPVEYNGVTYHIGQANNALVFPGLGLGTIVTKSKLITDGMFEACARAIAGMVNVGVPGAPMLPKVEDLRTVSATVAVEVAKTAMKEGVATEEPEDIIQAVQDAMWYPVYKPIRAI.

The Proton donor role is filled by Tyr-105. Residue Lys-178 is the Proton acceptor of the active site. A divalent metal cation contacts are provided by Glu-249, Asp-250, and Asp-273. NAD(+)-binding positions include 306–309, Asn-423, and Asn-468; that span reads AGTA.

Belongs to the malic enzymes family. It depends on Mg(2+) as a cofactor. Mn(2+) serves as cofactor.

It carries out the reaction (S)-malate + NAD(+) = pyruvate + CO2 + NADH. The catalysed reaction is oxaloacetate + H(+) = pyruvate + CO2. Its function is as follows. Catalyzes the decarboxylation of malate to pyruvate. Can use NAD and NADP, but with a strong preference for NAD. Can also catalyze the decarboxylation of oxaloacetate. Involved in keeping the ATP levels high. In Bacillus subtilis (strain 168), this protein is NAD-dependent malic enzyme 3 (malS).